The following is a 155-amino-acid chain: Ribosomal RNA large subunit methyltransferase H (155 aa).

S-adenosyl-L-methionine contacts are provided by leucine 72 and glycine 104.

The protein belongs to the RNA methyltransferase RlmH family. Homodimer.

It localises to the cytoplasm. It catalyses the reaction pseudouridine(1915) in 23S rRNA + S-adenosyl-L-methionine = N(3)-methylpseudouridine(1915) in 23S rRNA + S-adenosyl-L-homocysteine + H(+). Functionally, specifically methylates the pseudouridine at position 1915 (m3Psi1915) in 23S rRNA. The chain is Ribosomal RNA large subunit methyltransferase H from Fusobacterium nucleatum subsp. nucleatum (strain ATCC 25586 / DSM 15643 / BCRC 10681 / CIP 101130 / JCM 8532 / KCTC 2640 / LMG 13131 / VPI 4355).